An 86-amino-acid polypeptide reads, in one-letter code: Small ribosomal subunit protein bS18 (86 aa).

This sequence belongs to the bacterial ribosomal protein bS18 family. As to quaternary structure, part of the 30S ribosomal subunit. Forms a tight heterodimer with protein bS6.

Functionally, binds as a heterodimer with protein bS6 to the central domain of the 16S rRNA, where it helps stabilize the platform of the 30S subunit. This is Small ribosomal subunit protein bS18 from Campylobacter fetus subsp. fetus (strain 82-40).